A 589-amino-acid chain; its full sequence is Class I diterpene synthase 2, chloroplastic (589 aa).

5 residues coordinate Mg(2+): D328, D332, N472, T476, and E480. A DDXXD motif motif is present at residues 328–332 (DDFFD).

Belongs to the terpene synthase family. Mg(2+) serves as cofactor. Mostly expressed in trichomes of leaves and fruits.

It localises to the plastid. The protein localises to the chloroplast. The enzyme catalyses 9alpha-copalyl diphosphate + H2O = (13S)-vitexifolin A + diphosphate. The catalysed reaction is peregrinol diphosphate = (13R)-9,13-epoxylabd-14-ene + diphosphate. It catalyses the reaction peregrinol diphosphate + H2O = viteagnusin D + diphosphate. The protein operates within secondary metabolite biosynthesis; terpenoid biosynthesis. Its function is as follows. Involved in the biosynthesis of labdane-type diterpenoid including cleroda-dienols, and peregrinol lactones and furan derivatives, dopaminergic diterpenoids that can bind to dopamine receptors in the human pituitary gland, have probably ability to lower prolactin levels, and are used to treat menstrual cycle disorders (e.g. premenstrual syndrome and mastodynia). Terpene synthase the catalyzes the conversion of peregrinol diphosphate to viteagnusin D and 9,13(R)-epoxy-labd-14-ene, and of syn-copalyl diphosophate to vitexifolin A. This Vitex agnus-castus (Chaste tree) protein is Class I diterpene synthase 2, chloroplastic.